Consider the following 492-residue polypeptide: Glutamyl-tRNA(Gln) amidotransferase subunit A (492 aa).

Catalysis depends on charge relay system residues Lys84 and Ser159. The Acyl-ester intermediate role is filled by Ser183.

The protein belongs to the amidase family. GatA subfamily. As to quaternary structure, heterotrimer of A, B and C subunits.

It carries out the reaction L-glutamyl-tRNA(Gln) + L-glutamine + ATP + H2O = L-glutaminyl-tRNA(Gln) + L-glutamate + ADP + phosphate + H(+). Allows the formation of correctly charged Gln-tRNA(Gln) through the transamidation of misacylated Glu-tRNA(Gln) in organisms which lack glutaminyl-tRNA synthetase. The reaction takes place in the presence of glutamine and ATP through an activated gamma-phospho-Glu-tRNA(Gln). In Anaeromyxobacter dehalogenans (strain 2CP-C), this protein is Glutamyl-tRNA(Gln) amidotransferase subunit A.